The chain runs to 455 residues: Bifunctional protein GlmU (455 aa).

A pyrophosphorylase region spans residues 1–227 (MGLSVIILAA…CEEVQGVNDR (227 aa)). Residues 8 to 11 (LAAG), K22, Q73, 78 to 79 (GT), 100 to 102 (YGD), G137, E152, N167, and N225 each bind UDP-N-acetyl-alpha-D-glucosamine. Position 102 (D102) interacts with Mg(2+). Residue N225 participates in Mg(2+) binding. Residues 228–248 (WELTKLERYYQRLMAKKLSLA) are linker. The N-acetyltransferase stretch occupies residues 249–455 (GVTIIDPERF…KGWHRPTKKE (207 aa)). UDP-N-acetyl-alpha-D-glucosamine is bound by residues R332 and K350. Residue H362 is the Proton acceptor of the active site. UDP-N-acetyl-alpha-D-glucosamine contacts are provided by Y365 and N376. Acetyl-CoA-binding positions include A379, 385 to 386 (NY), S404, A422, and R439.

It in the N-terminal section; belongs to the N-acetylglucosamine-1-phosphate uridyltransferase family. This sequence in the C-terminal section; belongs to the transferase hexapeptide repeat family. As to quaternary structure, homotrimer. Requires Mg(2+) as cofactor.

Its subcellular location is the cytoplasm. The catalysed reaction is alpha-D-glucosamine 1-phosphate + acetyl-CoA = N-acetyl-alpha-D-glucosamine 1-phosphate + CoA + H(+). It catalyses the reaction N-acetyl-alpha-D-glucosamine 1-phosphate + UTP + H(+) = UDP-N-acetyl-alpha-D-glucosamine + diphosphate. It functions in the pathway nucleotide-sugar biosynthesis; UDP-N-acetyl-alpha-D-glucosamine biosynthesis; N-acetyl-alpha-D-glucosamine 1-phosphate from alpha-D-glucosamine 6-phosphate (route II): step 2/2. It participates in nucleotide-sugar biosynthesis; UDP-N-acetyl-alpha-D-glucosamine biosynthesis; UDP-N-acetyl-alpha-D-glucosamine from N-acetyl-alpha-D-glucosamine 1-phosphate: step 1/1. Its pathway is bacterial outer membrane biogenesis; LPS lipid A biosynthesis. In terms of biological role, catalyzes the last two sequential reactions in the de novo biosynthetic pathway for UDP-N-acetylglucosamine (UDP-GlcNAc). The C-terminal domain catalyzes the transfer of acetyl group from acetyl coenzyme A to glucosamine-1-phosphate (GlcN-1-P) to produce N-acetylglucosamine-1-phosphate (GlcNAc-1-P), which is converted into UDP-GlcNAc by the transfer of uridine 5-monophosphate (from uridine 5-triphosphate), a reaction catalyzed by the N-terminal domain. This Coxiella burnetii (strain Dugway 5J108-111) protein is Bifunctional protein GlmU.